A 525-amino-acid chain; its full sequence is Phospho-2-dehydro-3-deoxyheptonate aldolase 1, chloroplastic (525 aa).

Residues 1 to 13 are compositionally biased toward polar residues; the sequence is MALSNASSLSTRS. Positions 1–35 are disordered; the sequence is MALSNASSLSTRSIYGGDLSHRPSNRQSSFTFHPA. The N-terminal 52 residues, 1–52, are a transit peptide targeting the chloroplast; the sequence is MALSNASSLSTRSIYGGDLSHRPSNRQSSFTFHPAVNTKPKSVNLVTAVHAA.

The protein belongs to the class-II DAHP synthase family.

Its subcellular location is the plastid. It localises to the chloroplast. The catalysed reaction is D-erythrose 4-phosphate + phosphoenolpyruvate + H2O = 7-phospho-2-dehydro-3-deoxy-D-arabino-heptonate + phosphate. The protein operates within metabolic intermediate biosynthesis; chorismate biosynthesis; chorismate from D-erythrose 4-phosphate and phosphoenolpyruvate: step 1/7. This Arabidopsis thaliana (Mouse-ear cress) protein is Phospho-2-dehydro-3-deoxyheptonate aldolase 1, chloroplastic (DHS1).